Consider the following 338-residue polypeptide: Probable tRNA pseudouridine synthase B (338 aa).

The active-site Nucleophile is the aspartate 78. One can recognise a PUA domain in the interval 245–320 (LPKIILRDSA…IAASPIRVLM (76 aa)).

The protein belongs to the pseudouridine synthase TruB family. Type 2 subfamily.

It catalyses the reaction uridine(55) in tRNA = pseudouridine(55) in tRNA. Its function is as follows. Could be responsible for synthesis of pseudouridine from uracil-55 in the psi GC loop of transfer RNAs. This is Probable tRNA pseudouridine synthase B from Methanosarcina acetivorans (strain ATCC 35395 / DSM 2834 / JCM 12185 / C2A).